Consider the following 379-residue polypeptide: Carbamoyl phosphate synthase small chain (379 aa).

The interval 1-189 (MSKSALLVLE…GLPEAKDDSE (189 aa)) is CPSase. L-glutamine is bound by residues Ser-47, Gly-241, and Gly-243. The Glutamine amidotransferase type-1 domain maps to 193–379 (HVVAYDFGAK…FIELIKQHSA (187 aa)). Cys-269 functions as the Nucleophile in the catalytic mechanism. Residues Leu-270, Gln-273, Asn-311, Gly-313, and Phe-314 each coordinate L-glutamine. Active-site residues include His-353 and Glu-355.

This sequence belongs to the CarA family. Composed of two chains; the small (or glutamine) chain promotes the hydrolysis of glutamine to ammonia, which is used by the large (or ammonia) chain to synthesize carbamoyl phosphate. Tetramer of heterodimers (alpha,beta)4.

The enzyme catalyses hydrogencarbonate + L-glutamine + 2 ATP + H2O = carbamoyl phosphate + L-glutamate + 2 ADP + phosphate + 2 H(+). The catalysed reaction is L-glutamine + H2O = L-glutamate + NH4(+). It participates in amino-acid biosynthesis; L-arginine biosynthesis; carbamoyl phosphate from bicarbonate: step 1/1. The protein operates within pyrimidine metabolism; UMP biosynthesis via de novo pathway; (S)-dihydroorotate from bicarbonate: step 1/3. Its function is as follows. Small subunit of the glutamine-dependent carbamoyl phosphate synthetase (CPSase). CPSase catalyzes the formation of carbamoyl phosphate from the ammonia moiety of glutamine, carbonate, and phosphate donated by ATP, constituting the first step of 2 biosynthetic pathways, one leading to arginine and/or urea and the other to pyrimidine nucleotides. The small subunit (glutamine amidotransferase) binds and cleaves glutamine to supply the large subunit with the substrate ammonia. This Vibrio vulnificus (strain YJ016) protein is Carbamoyl phosphate synthase small chain.